A 96-amino-acid polypeptide reads, in one-letter code: CRISPR-associated endoribonuclease Cas2 (96 aa).

A Mg(2+)-binding site is contributed by Asp-8.

The protein belongs to the CRISPR-associated endoribonuclease Cas2 protein family. In terms of assembly, homodimer, forms a heterotetramer with a Cas1 homodimer. Mg(2+) serves as cofactor.

Its function is as follows. CRISPR (clustered regularly interspaced short palindromic repeat), is an adaptive immune system that provides protection against mobile genetic elements (viruses, transposable elements and conjugative plasmids). CRISPR clusters contain sequences complementary to antecedent mobile elements and target invading nucleic acids. CRISPR clusters are transcribed and processed into CRISPR RNA (crRNA). Functions as a ssRNA-specific endoribonuclease. Involved in the integration of spacer DNA into the CRISPR cassette. The polypeptide is CRISPR-associated endoribonuclease Cas2 (Chlorobaculum tepidum (strain ATCC 49652 / DSM 12025 / NBRC 103806 / TLS) (Chlorobium tepidum)).